Here is a 935-residue protein sequence, read N- to C-terminus: Ribonuclease E (935 aa).

One can recognise an S1 motif domain in the interval 39–119; the sequence is ANIYKGKITR…GNKGAALTTF (81 aa). Mg(2+) is bound by residues Asp-302 and Asp-345. Cys-403 and Cys-406 together coordinate Zn(2+). The required for zinc-mediated homotetramerization and catalytic activity stretch occupies residues 403 to 406; it reads CPRC. 2 disordered regions span residues 571–669 and 698–743; these read TKSE…DLRK and VQNN…KSPM. 2 stretches are compositionally biased toward basic and acidic residues: residues 593–625 and 701–719; these read RSQDRRSSRRPRSENNETERTEEQVRNVRERNQ and NDEKPVHQNQRSERQERQR. Residues 720–734 are compositionally biased toward basic residues; that stretch reads RTPRHLRAANNQRRR.

It belongs to the RNase E/G family. RNase E subfamily. As to quaternary structure, component of the RNA degradosome, which is a multiprotein complex involved in RNA processing and mRNA degradation. Within the RNA degradosome, RNase E assembles into a homotetramer formed by a dimer of dimers. Zn(2+) is required as a cofactor. Requires Mg(2+) as cofactor.

It localises to the cytoplasm. The protein localises to the cell inner membrane. The catalysed reaction is Endonucleolytic cleavage of single-stranded RNA in A- and U-rich regions.. In terms of biological role, endoribonuclease that plays a central role in RNA processing and decay. Required for the maturation of 5S and 16S rRNAs and the majority of tRNAs. Also involved in the degradation of most mRNAs. In Haemophilus influenzae (strain ATCC 51907 / DSM 11121 / KW20 / Rd), this protein is Ribonuclease E.